The following is a 468-amino-acid chain: Interleukin-9 receptor (468 aa).

The N-terminal stretch at 1–37 (MALGRCIAEGWTLERVAVKQVSWFLIYSWVCSGVCRG) is a signal peptide. Residues 38–270 (VSVPEQGGGG…GLLVPRWQWS (233 aa)) are Extracellular-facing. Asn116 and Asn155 each carry an N-linked (GlcNAc...) asparagine glycan. Residues 148–256 (PPSDLQSNVS…WSQPVSFPSP (109 aa)) enclose the Fibronectin type-III domain. Positions 244–248 (WSEWS) match the WSXWS motif motif. A helical membrane pass occupies residues 271-291 (ASILVVVPIFLLLTGFVHLLF). Over 292-468 (KLSPRLKRIF…PVALPVSSRA (177 aa)) the chain is Cytoplasmic. Residues 301 to 309 (FYQNIPSPE) carry the Box 1 motif motif. Positions 407–426 (PQEDWAPLGSARPPPPDSDS) are disordered.

Belongs to the type I cytokine receptor family. Type 4 subfamily. As to quaternary structure, interacts with IL9.

Its subcellular location is the cell membrane. The protein resides in the secreted. Its function is as follows. Plays an important role in the immune response against parasites by acting as a receptor of IL9. In Mus musculus (Mouse), this protein is Interleukin-9 receptor (Il9r).